The sequence spans 555 residues: 2-isopropylmalate synthase (555 aa).

In terms of domain architecture, Pyruvate carboxyltransferase spans 30 to 303; the sequence is PIWCSVDLRD…DPGLDCTDIN (274 aa). The Mg(2+) site is built by Asp-39, His-242, His-244, and Asn-278. A regulatory domain region spans residues 437-555; that stretch reads QPDARIKFVD…VSAANRVIAK (119 aa).

Belongs to the alpha-IPM synthase/homocitrate synthase family. LeuA type 2 subfamily. As to quaternary structure, homodimer. The cofactor is Mg(2+).

It localises to the cytoplasm. It catalyses the reaction 3-methyl-2-oxobutanoate + acetyl-CoA + H2O = (2S)-2-isopropylmalate + CoA + H(+). It participates in amino-acid biosynthesis; L-leucine biosynthesis; L-leucine from 3-methyl-2-oxobutanoate: step 1/4. In terms of biological role, catalyzes the condensation of the acetyl group of acetyl-CoA with 3-methyl-2-oxobutanoate (2-ketoisovalerate) to form 3-carboxy-3-hydroxy-4-methylpentanoate (2-isopropylmalate). The sequence is that of 2-isopropylmalate synthase from Brucella melitensis biotype 1 (strain ATCC 23456 / CCUG 17765 / NCTC 10094 / 16M).